The primary structure comprises 143 residues: Putative complexin-1 (143 aa).

The interval 16-72 is disordered; that stretch reads EVTGGLGMKDDGGEKTETGEDPEVIAARLEQEERRKEKHRKMENEREKMRQGIRDKY. Basic and acidic residues-rich tracts occupy residues 23–33 and 44–72; these read MKDDGGEKTET and LEQE…RDKY. The stretch at 40-71 forms a coiled coil; sequence IAARLEQEERRKEKHRKMENEREKMRQGIRDK.

The protein belongs to the complexin/synaphin family.

The protein resides in the cytoplasm. Its subcellular location is the cytosol. In terms of biological role, positively regulates a late step in synaptic vesicle exocytosis. This chain is Putative complexin-1 (cpx-1), found in Caenorhabditis elegans.